The sequence spans 396 residues: Tryptophan synthase beta chain (396 aa).

The residue at position 86 (lysine 86) is an N6-(pyridoxal phosphate)lysine.

It belongs to the TrpB family. In terms of assembly, tetramer of two alpha and two beta chains. Requires pyridoxal 5'-phosphate as cofactor.

The catalysed reaction is (1S,2R)-1-C-(indol-3-yl)glycerol 3-phosphate + L-serine = D-glyceraldehyde 3-phosphate + L-tryptophan + H2O. It participates in amino-acid biosynthesis; L-tryptophan biosynthesis; L-tryptophan from chorismate: step 5/5. In terms of biological role, the beta subunit is responsible for the synthesis of L-tryptophan from indole and L-serine. The sequence is that of Tryptophan synthase beta chain from Vibrio cholerae serotype O1 (strain ATCC 39315 / El Tor Inaba N16961).